The chain runs to 83 residues: U5-theraphotoxin-Hs1a 6 (83 aa).

The signal sequence occupies residues 1–21; it reads MKTSMFLTLTGLVLLFVVCYA. The propeptide occupies 22-49; sequence SESEEKEFPKELLSSIFAADSDFKVEER. Cystine bridges form between Cys-51/Cys-63, Cys-56/Cys-68, and Cys-62/Cys-75.

Belongs to the neurotoxin 10 (Hwtx-1) family. 51 (Hntx-8) subfamily. Hntx-8 sub-subfamily. In terms of tissue distribution, expressed by the venom gland.

Its subcellular location is the secreted. Functionally, agglutinates erythrocytes. In Cyriopagopus schmidti (Chinese bird spider), this protein is U5-theraphotoxin-Hs1a 6.